The following is a 131-amino-acid chain: MKKTTVINSEISSVIAGMGHMDWLGIGDAGMPVPLGTKKIDLALTKNLPSFIDVLKNVLTELEVQKIYLADEIKTKNPEQLQAIKQLMPNVEIEFVPHSELKKDLAKTHAFIRTGEMTAFSNIILESGVVF.

The Proton donor role is filled by histidine 20. Substrate contacts are provided by residues aspartate 28, histidine 98, and 120-122 (FSN).

The protein belongs to the RbsD / FucU family. RbsD subfamily. Homodecamer.

The protein localises to the cytoplasm. It catalyses the reaction beta-D-ribopyranose = beta-D-ribofuranose. The protein operates within carbohydrate metabolism; D-ribose degradation; D-ribose 5-phosphate from beta-D-ribopyranose: step 1/2. Its function is as follows. Catalyzes the interconversion of beta-pyran and beta-furan forms of D-ribose. This Oenococcus oeni (strain ATCC BAA-331 / PSU-1) protein is D-ribose pyranase.